The following is a 510-amino-acid chain: 2,3-bisphosphoglycerate-independent phosphoglycerate mutase (510 aa).

D12 lines the Mn(2+) pocket. Y36 is modified (phosphotyrosine). S62 lines the Mn(2+) pocket. S62 serves as the catalytic Phosphoserine intermediate. Residues H123, 153-154, R185, R191, 261-264, and K336 each bind substrate; these read RD and RPDR. Positions 403, 407, 444, 445, and 462 each coordinate Mn(2+).

Belongs to the BPG-independent phosphoglycerate mutase family. Monomer. Mn(2+) is required as a cofactor.

The enzyme catalyses (2R)-2-phosphoglycerate = (2R)-3-phosphoglycerate. It functions in the pathway carbohydrate degradation; glycolysis; pyruvate from D-glyceraldehyde 3-phosphate: step 3/5. Its function is as follows. Essential for rapid growth and for sporulation. Catalyzes the interconversion of 2-phosphoglycerate and 3-phosphoglycerate. The polypeptide is 2,3-bisphosphoglycerate-independent phosphoglycerate mutase (Halalkalibacterium halodurans (strain ATCC BAA-125 / DSM 18197 / FERM 7344 / JCM 9153 / C-125) (Bacillus halodurans)).